Consider the following 871-residue polypeptide: Coatomer subunit gamma-2 (871 aa).

A compositionally biased stretch (basic and acidic residues) spans 1–11; the sequence is MIKKFDKKDEE. Positions 1-20 are disordered; the sequence is MIKKFDKKDEESGSGSNPFR. HEAT repeat units lie at residues 64-101, 283-320, 321-355, 356-392, 395-430, and 467-504; these read TEAT…ISED, RELA…KHPS, AVTA…GSES, SVDR…KYPR, SVMM…ENPE, and PVPS…QNEN. T594 is modified (phosphothreonine).

The protein belongs to the COPG family. In terms of assembly, oligomeric complex. Binds to CDC42. Interacts with JAGN1. Interacts with TMED10 (via cytoplasmic domain).

Its subcellular location is the cytoplasm. It localises to the cytosol. The protein resides in the golgi apparatus membrane. The protein localises to the cytoplasmic vesicle. It is found in the COPI-coated vesicle membrane. Its function is as follows. The coatomer is a cytosolic protein complex that binds to dilysine motifs and reversibly associates with Golgi non-clathrin-coated vesicles, which further mediate biosynthetic protein transport from the ER, via the Golgi up to the trans Golgi network. Coatomer complex is required for budding from Golgi membranes, and is essential for the retrograde Golgi-to-ER transport of dilysine-tagged proteins. In mammals, the coatomer can only be recruited by membranes associated to ADP-ribosylation factors (ARFs), which are small GTP-binding proteins; the complex also influences the Golgi structural integrity, as well as the processing, activity, and endocytic recycling of LDL receptors. The chain is Coatomer subunit gamma-2 (COPG2) from Bos taurus (Bovine).